A 380-amino-acid polypeptide reads, in one-letter code: Serpin B7 (380 aa).

2 positions are modified to phosphoserine: Ser-217 and Ser-223.

Belongs to the serpin family. Ov-serpin subfamily. As to expression, predominantly expressed in mesangial cells. Expressed in the epidermis of the whole body.

It localises to the cytoplasm. In terms of biological role, might function as an inhibitor of Lys-specific proteases. Might influence the maturation of megakaryocytes via its action as a serpin. This is Serpin B7 (SERPINB7) from Homo sapiens (Human).